Reading from the N-terminus, the 235-residue chain is Ribitol-5-phosphate cytidylyltransferase (235 aa).

Residues 7-10 (LAGG), 82-88 (GADRNTS), and Ser113 each bind CTP.

Belongs to the IspD/TarI cytidylyltransferase family. TarI subfamily.

It carries out the reaction D-ribitol 5-phosphate + CTP + H(+) = CDP-L-ribitol + diphosphate. The protein operates within cell wall biogenesis; poly(ribitol phosphate) teichoic acid biosynthesis. Catalyzes the transfer of the cytidylyl group of CTP to D-ribitol 5-phosphate. The polypeptide is Ribitol-5-phosphate cytidylyltransferase (Streptococcus pneumoniae serotype 2 (strain D39 / NCTC 7466)).